Here is a 203-residue protein sequence, read N- to C-terminus: MDFPKVLLIRHFTEVLGMKYAGEGGEVLWFEEGLNRVAVGIYFTDLYEEAELYKRVGALMGLGASKVFLAVLPDALAFVDPRYFKANGVGLVVVDPAKGVDGVEVKIFARARPAAVEPLKIDAVKAALHEYLASELKRVEESLFEKVRRYVDQRVEEVKRALQAVEEAKRAAPPVQRAAAESAQEPRGGIGENEWVKILRSKR.

As to quaternary structure, interacts with crenactin.

Its subcellular location is the cytoplasm. It localises to the cytoskeleton. Functionally, part of an actin-like archaeal cytoskeleton. Prevents polymerization of crenactin filaments by binding its C-terminus into crenactin's hydrophobic groove. May act by competing with the D-loop of the following crenactin subunit for the hydrophobic groove. In Pyrobaculum calidifontis (strain DSM 21063 / JCM 11548 / VA1), this protein is Arcadin-2.